The sequence spans 836 residues: Pentatricopeptide repeat-containing protein At2g39620 (836 aa).

PPR repeat units follow at residues 1–35 (MPIN…GLKP), 36–62 (HNQL…VRDP), 63–98 (GVVL…GIDP), 99–133 (DKYS…GLES), 134–164 (DVYI…MHVK), 165–199 (DVVT…CVDI), 200–230 (DHVS…VIKK), 233–263 (IFAF…VWRK), 264–298 (DESS…DVRM), 299–333 (NKVA…GLIG), 334–364 (DVSV…IEDR), 365–399 (DVVS…HIKP), 400–434 (NAVT…DIES), 435–465 (ELET…LPIK), 466–500 (DAVA…GVCP), 501–535 (DSRT…GFDS), 536–566 (ECHV…CGFE), 568–602 (STVS…KFQP), 603–637 (NAVT…GFCS), 638–668 (QTPV…ISNK), 669–703 (YIVS…ELKP), 704–734 (DSVS…MGER), and 740–770 (EVEH…MRVK). Residues 775 to 836 (VWGALLNSSR…KVPACSWIEV (62 aa)) are type E motif; degenerate.

This sequence belongs to the PPR family. PCMP-E subfamily.

The polypeptide is Pentatricopeptide repeat-containing protein At2g39620 (PCMP-E33) (Arabidopsis thaliana (Mouse-ear cress)).